The sequence spans 180 residues: Glycodelin (180 aa).

Positions 1-18 (MLCLLLTLGVALVCGVPA) are cleaved as a signal peptide. N-linked (GlcNAc...) (complex) asparagine glycosylation is found at Asn46 and Asn81. 2 disulfide bridges follow: Cys84–Cys178 and Cys124–Cys137.

It belongs to the calycin superfamily. Lipocalin family. Homodimer. Four distinct glycoforms A, C, F and S arise from different N-linked oligosaccharide chains at amino acid residues Asn-46 and Asn-81. Glycodelin-A and -F are taken up by the cumulus cells in which partial deglycosylation takes place to produce glycodelin-C. As to expression, this protein is, the main protein synthesized and secreted in the endometrium from mid-luteal phase of the menstrual cycle and during the first semester of pregnancy. Glycodelin-A is expressed in amniotic fluid, endometrium/decidua and maternal serum (at protein level). Glycodelin-F is expressed in follicular fluid, luteinized granulosa cells and the oviduct (at protein level). Glycodelin-S is expressed in seminal plasma and seminal vesicles (at protein level). Glycodelin-C is detected in cumulus cells (at protein level), but cumulus cells do not synthesize Glycodelin-C but take up and convert glycodelin-A and -F vis glycan remodeling.

It localises to the secreted. Functionally, glycoprotein that regulates critical steps during fertilization and also has immunomonomodulatory effects. Four glycoforms, namely glycodelin-S, -A, -F and -C have been identified in reproductive tissues that differ in glycosylation and biological activity. Glycodelin-A has contraceptive and immunosuppressive activities. Glycodelin-C stimulates binding of spermatozoa to the zona pellucida. Glycodelin-F inhibits spermatozoa-zona pellucida binding and significantly suppresses progesterone-induced acrosome reaction of spermatozoa. Glycodelin-S in seminal plasma maintains the uncapacitated state of human spermatozoa. The protein is Glycodelin (PAEP) of Homo sapiens (Human).